The chain runs to 333 residues: uncharacterized protein (333 aa).

Positions 234 to 333 (PPLAPTSAPA…GLSSEFDSDD (100 aa)) are disordered. Residues 251–265 (VPPPVPAPPTPPPQE) are compositionally biased toward pro residues. The span at 324-333 (GLSSEFDSDD) shows a compositional bias: polar residues.

It localises to the cell projection. The protein resides in the cilium. The protein localises to the flagellum. This is an uncharacterized protein from Homo sapiens (Human).